We begin with the raw amino-acid sequence, 161 residues long: CASP-like protein 1C2 (161 aa).

Topologically, residues 1 to 7 (MAKNTDR) are cytoplasmic. A helical membrane pass occupies residues 8–28 (ICFLVLRLLAFGATLSAAIVM). The Extracellular portion of the chain corresponds to 29 to 53 (ATSHERTTYLSLSIEAKYSHTPAFK). Residues 54–74 (YFVIANAIGSAYSLLLLFLPS) form a helical membrane-spanning segment. At 75–86 (HGSLWPLVIASD) the chain is on the cytoplasmic side. Residues 87 to 107 (VVITMFLTSSISAALSIAYVG) form a helical membrane-spanning segment. Topologically, residues 108–131 (KKGNSYAGWLPICDQVPNYCNHVT) are extracellular. The chain crosses the membrane as a helical span at residues 132–152 (GALAAGFIGVVLYMVLLQYSI). Residues 153 to 161 (YTKCCKSSS) lie on the Cytoplasmic side of the membrane.

This sequence belongs to the Casparian strip membrane proteins (CASP) family. Homodimer and heterodimers.

The protein localises to the cell membrane. In Vitis vinifera (Grape), this protein is CASP-like protein 1C2.